A 689-amino-acid chain; its full sequence is Glycine--tRNA ligase beta subunit (689 aa).

The protein belongs to the class-II aminoacyl-tRNA synthetase family. As to quaternary structure, tetramer of two alpha and two beta subunits.

It localises to the cytoplasm. The enzyme catalyses tRNA(Gly) + glycine + ATP = glycyl-tRNA(Gly) + AMP + diphosphate. In Acinetobacter baumannii (strain ACICU), this protein is Glycine--tRNA ligase beta subunit.